The primary structure comprises 366 residues: Flagellar P-ring protein (366 aa).

An N-terminal signal peptide occupies residues 1–19; the sequence is MTLIRLLACLLFLPCLAQA.

Belongs to the FlgI family. As to quaternary structure, the basal body constitutes a major portion of the flagellar organelle and consists of four rings (L,P,S, and M) mounted on a central rod.

Its subcellular location is the periplasm. The protein localises to the bacterial flagellum basal body. Assembles around the rod to form the L-ring and probably protects the motor/basal body from shearing forces during rotation. This chain is Flagellar P-ring protein, found in Ruegeria pomeroyi (strain ATCC 700808 / DSM 15171 / DSS-3) (Silicibacter pomeroyi).